The primary structure comprises 195 residues: MKKKVLAIALVTAFTGMGVAQAADVTAQAVATWSATAKKDTTSKLVVTPLGSLAFQYAEGIKGFNSQKGLFDVAIEGDATATAFKLTSRLITNTLTQLDTSGSTLSVGVDYNGAAVEKTADTVMIDTANGVLGGNLSALANGYNASGRTTAQDGFTFSIISGTTNGTTAVTDYSTLPEGIWSGDVSVQFDATWTS.

An N-terminal signal peptide occupies residues 1–22; the sequence is MKKKVLAIALVTAFTGMGVAQA.

It belongs to the EcpA/MatB fimbrillin family. As to quaternary structure, self-associates. Forms filaments. Interacts with EcpD.

It localises to the fimbrium. Functionally, part of the ecpRABCDE operon, which encodes the E.coli common pilus (ECP). ECP plays a dual role in early-stage biofilm development and host cell recognition. Major subunit of the fimbria. This Klebsiella pneumoniae (strain 342) protein is Common pilus major fimbrillin subunit EcpA (ecpA).